A 554-amino-acid polypeptide reads, in one-letter code: Developmental and secondary metabolism regulator ve-1 (554 aa).

One can recognise a Velvet domain in the interval 31–230 (GRKLWYSLRV…AEQGCRVRIR (200 aa)). Residues 45–50 (LRARAC) carry the Nuclear localization signal motif. Positions 166–175 (TKEDKDKDPE) are enriched in basic and acidic residues. Disordered regions lie at residues 166-190 (TKED…SFDF), 232-430 (DVRM…PHRL), and 465-528 (PRAY…VDDK). The span at 276 to 292 (RSMSGSTERTPYSSISD) shows a compositional bias: polar residues. Pro residues-rich tracts occupy residues 363-372 (SYPPPPPPHQ) and 485-494 (LPPPPPPPPQ). A PEST region spans residues 455 to 487 (SPSNMAAPPYPRAYSVSNSGGLTSAGGYNQLPP). A compositionally biased stretch (basic and acidic residues) spans 500 to 528 (RAHDQTFRADPEMRRYQDGARERESVDDK).

This sequence belongs to the velvet family. VeA subfamily. In terms of assembly, component of the heterotrimeric velvet complex composed of lae-1, ve-1 and vel-2; Ve-1 acting as a bridging protein between lae-1 and vel-2.

It localises to the nucleus. The protein resides in the cytoplasm. In terms of biological role, component of the velvet transcription factor complex that controls sexual/asexual developmental ratio in response to light, promoting sexual development in the darkness while stimulating asexual sporulation under illumination. The velvet complex hat acts as a global regulator for secondary metabolite gene expression. In Neurospora crassa (strain ATCC 24698 / 74-OR23-1A / CBS 708.71 / DSM 1257 / FGSC 987), this protein is Developmental and secondary metabolism regulator ve-1.